The sequence spans 202 residues: Stress enhanced protein 2, chloroplastic (202 aa).

Residues 1-60 constitute a chloroplast transit peptide; sequence MAMATRAIRYQLPSPRFRAPRCESSEPIKQIQIQQRPRGGDLAENGKIVLQPRLCTLRSY. The next 2 membrane-spanning stretches (helical) occupy residues 111-131 and 142-162; these read LAMI…NSLF and AIGA…LTIS.

Belongs to the ELIP/psbS family.

The protein localises to the plastid. It is found in the chloroplast thylakoid membrane. Its function is as follows. May be involved in non-photochemical quenching, a process that maintains the balance between dissipation and utilization of light energy to minimize generation of oxidizing molecules, thereby protecting the plant against photo-oxidative damage. May play a photoprotective role in the thylakoid membrane in response to light stress. This is Stress enhanced protein 2, chloroplastic from Arabidopsis thaliana (Mouse-ear cress).